An 80-amino-acid polypeptide reads, in one-letter code: Exodeoxyribonuclease 7 small subunit (80 aa).

This sequence belongs to the XseB family. Heterooligomer composed of large and small subunits.

The protein resides in the cytoplasm. It carries out the reaction Exonucleolytic cleavage in either 5'- to 3'- or 3'- to 5'-direction to yield nucleoside 5'-phosphates.. Functionally, bidirectionally degrades single-stranded DNA into large acid-insoluble oligonucleotides, which are then degraded further into small acid-soluble oligonucleotides. This chain is Exodeoxyribonuclease 7 small subunit, found in Lactobacillus helveticus (strain DPC 4571).